Here is an 843-residue protein sequence, read N- to C-terminus: Potassium transporter 10 (843 aa).

A compositionally biased stretch (low complexity) spans 1-15; sequence MKSPSPVDPESPSSP. Positions 1–25 are disordered; the sequence is MKSPSPVDPESPSSPDCKGGSSSKR. Topologically, residues 1 to 34 are cytoplasmic; it reads MKSPSPVDPESPSSPDCKGGSSSKRRRLPWRMTM. Residues 35–55 traverse the membrane as a helical segment; it reads SLAYQSLGVVYGDLSTSPLYV. Over 56–72 the chain is Vacuolar; the sequence is YKAAFAEDIQHSETNEE. A helical transmembrane segment spans residues 73 to 93; sequence ILGVLSFVFWTLTLVPLLKYV. The Cytoplasmic portion of the chain corresponds to 94–183; it reads CVVLRADDNG…LLERHKVLQR (90 aa). A helical transmembrane segment spans residues 184 to 204; the sequence is VLLVLALVGTCMVIGDGVLTP. Residues 205–225 are Vacuolar-facing; that stretch reads AISVFSAVSGLELSMEKHQHK. The helical transmembrane segment at 226 to 246 threads the bilayer; that stretch reads YVEVPIACFVLVCLFCLQHYG. The Cytoplasmic segment spans residues 247-249; sequence THR. A helical transmembrane segment spans residues 250–270; that stretch reads VGFLFAPIVITWLLCISMIGV. At 271–298 the chain is on the vacuolar side; sequence YNIVHWEPNVYRALSPYYMYKFLKKTQR. The helical transmembrane segment at 299-319 threads the bilayer; that stretch reads GGWMSLGGILLCITGSEAMFA. Topologically, residues 320–326 are cytoplasmic; that stretch reads DLGHFNQ. Residues 327-347 form a helical membrane-spanning segment; the sequence is LSIQIAFTCMVYPSLILAYMG. Over 348–377 the chain is Vacuolar; it reads QAAYLCKHHIIESDYRIGFYVSVPEKIRWP. Residues 378–398 form a helical membrane-spanning segment; that stretch reads VLAIAILAAVVGSQAVITGTF. Residues 399–425 are Cytoplasmic-facing; sequence SMIKQCTALGCFPRVKIVHTSDKVHGQ. The chain crosses the membrane as a helical span at residues 426-446; the sequence is IYIPEINWILMILCLAITIGF. At 447 to 451 the chain is on the vacuolar side; it reads RDTKH. Residues 452–472 form a helical membrane-spanning segment; it reads LGNASGLAVITVMLVTTCLMS. Topologically, residues 473–482 are cytoplasmic; that stretch reads LVIVLCWHKS. A helical transmembrane segment spans residues 483–505; sequence IFLAFGFIIFFGTIEALYFSASL. The Vacuolar segment spans residues 506-510; it reads IKFRE. The helical transmembrane segment at 511–531 threads the bilayer; that stretch reads GAWVPIVLAFIFMAIMCIWHY. At 532 to 843 the chain is on the cytoplasmic side; that stretch reads GTIKKYEFDL…TLEVGMIYYV (312 aa). The disordered stretch occupies residues 667–747; sequence AASSKPKNVC…IMSPSPSPPP (81 aa). The segment covering 718-735 has biased composition (gly residues); it reads GGSGSGSGRGSSRGGGGA.

The protein belongs to the HAK/KUP transporter (TC 2.A.72.3) family. In terms of tissue distribution, expressed in roots, shoots, and panicle at flowering stage.

The protein resides in the vacuole membrane. High-affinity potassium transporter. This chain is Potassium transporter 10 (HAK10), found in Oryza sativa subsp. japonica (Rice).